A 251-amino-acid polypeptide reads, in one-letter code: MGQKVSPMGLRVGINREWDAAWYAEKTQVANLLLEDLKIRKYINEVYAKAAISRVIIERVKGPNNKDRVKITLHTAKPGVVIGHEAETKNKVVKELGFITKKNIILNVVEVRRPELDATLVAKSIAEQLEARASFRRVQKVAIQRALKAGAKGAKTLISGRLGGAEIARSEGYNEGQVPLQTLRADVDYAVAEAHTTYGKLGIKVWIYKGEVFDVQPRAFQEEKKPAKKFNKKPVAAKPANKEEKSSKEVK.

Positions 39-112 constitute a KH type-2 domain; that stretch reads IRKYINEVYA…NIILNVVEVR (74 aa). Residues 222 to 251 are disordered; that stretch reads EEKKPAKKFNKKPVAAKPANKEEKSSKEVK. The segment covering 240–251 has biased composition (basic and acidic residues); it reads ANKEEKSSKEVK.

It belongs to the universal ribosomal protein uS3 family. Part of the 30S ribosomal subunit. Forms a tight complex with proteins S10 and S14.

Functionally, binds the lower part of the 30S subunit head. Binds mRNA in the 70S ribosome, positioning it for translation. This is Small ribosomal subunit protein uS3 from Anaeroplasma abactoclasticum.